The sequence spans 568 residues: Potassium-transporting ATPase potassium-binding subunit (568 aa).

Helical transmembrane passes span 1 to 21, 60 to 80, 129 to 149, 174 to 194, 251 to 271, 278 to 298, 381 to 401, 420 to 440, 488 to 508, and 528 to 548; these read MWLT…LAVP, GLAL…LLRA, AITF…AGFI, VMLP…VPQA, IHIL…GSML, WVLF…VFTA, VGLI…GMMI, VMLA…LAAV, IGLA…ALAG, and PLFM…TFLP.

It belongs to the KdpA family. In terms of assembly, the system is composed of three essential subunits: KdpA, KdpB and KdpC.

The protein localises to the cell inner membrane. Its function is as follows. Part of the high-affinity ATP-driven potassium transport (or Kdp) system, which catalyzes the hydrolysis of ATP coupled with the electrogenic transport of potassium into the cytoplasm. This subunit binds the periplasmic potassium ions and delivers the ions to the membrane domain of KdpB through an intramembrane tunnel. The polypeptide is Potassium-transporting ATPase potassium-binding subunit (Delftia acidovorans (strain DSM 14801 / SPH-1)).